We begin with the raw amino-acid sequence, 373 residues long: Putative citrate synthase 2 (373 aa).

Active-site residues include H250 and E303.

The protein belongs to the citrate synthase family.

It catalyses the reaction oxaloacetate + acetyl-CoA + H2O = citrate + CoA + H(+). The protein operates within carbohydrate metabolism; tricarboxylic acid cycle; isocitrate from oxaloacetate: step 1/2. This is Putative citrate synthase 2 (citA) from Mycobacterium bovis (strain ATCC BAA-935 / AF2122/97).